Reading from the N-terminus, the 621-residue chain is Lethal(3)malignant brain tumor-like protein 4 (621 aa).

A disordered region spans residues 1 to 48 (MRQPNRKRKLSLESTERMNQDRCTGQTEEEKKPGEVTTPSKRESSVTT). 2 stretches are compositionally biased toward basic and acidic residues: residues 10–20 (LSLESTERMNQ) and 28–44 (EEEKKPGEVTTPSKRES). MBT repeat units follow at residues 52-152 (WSWE…LHIP), 160-260 (FVWM…LVAP), and 269-364 (FSWT…LEVP). A CCHHC-type zinc finger spans residues 370-414 (VKILPGQPACPTPGCRGIGHIRGPRYAGHHSAFGCPYSDVNLKRE). Residues Cys-379, Cys-384, His-398, and Cys-404 each coordinate Zn(2+). One can recognise an SAM domain in the interval 543 to 607 (WTVDEVAEFV…YNSILMFRNS (65 aa)).

Its subcellular location is the nucleus. Functionally, putative Polycomb group (PcG) protein. PcG proteins maintain the transcriptionally repressive state of genes, probably via a modification of chromatin, rendering it heritably changed in its expressibility. The sequence is that of Lethal(3)malignant brain tumor-like protein 4 (L3mbtl4) from Mus musculus (Mouse).